The primary structure comprises 125 residues: Small ribosomal subunit protein uS12 (125 aa).

Residue Asp89 is modified to 3-methylthioaspartic acid.

This sequence belongs to the universal ribosomal protein uS12 family. In terms of assembly, part of the 30S ribosomal subunit. Contacts proteins S8 and S17. May interact with IF1 in the 30S initiation complex.

Its function is as follows. With S4 and S5 plays an important role in translational accuracy. Functionally, interacts with and stabilizes bases of the 16S rRNA that are involved in tRNA selection in the A site and with the mRNA backbone. Located at the interface of the 30S and 50S subunits, it traverses the body of the 30S subunit contacting proteins on the other side and probably holding the rRNA structure together. The combined cluster of proteins S8, S12 and S17 appears to hold together the shoulder and platform of the 30S subunit. The protein is Small ribosomal subunit protein uS12 of Cupriavidus pinatubonensis (strain JMP 134 / LMG 1197) (Cupriavidus necator (strain JMP 134)).